Consider the following 552-residue polypeptide: uncharacterized protein (552 aa).

Residues 8–200 (KLFAEMIIQG…LAIVYAGFLK (193 aa)) form the DhaL domain.

This is an uncharacterized protein from Staphylococcus saprophyticus subsp. saprophyticus (strain ATCC 15305 / DSM 20229 / NCIMB 8711 / NCTC 7292 / S-41).